Here is a 339-residue protein sequence, read N- to C-terminus: tRNA N6-adenosine threonylcarbamoyltransferase (339 aa).

Fe cation-binding residues include histidine 111 and histidine 115. Substrate-binding positions include 134 to 138 (VVSGG), aspartate 167, glycine 180, and asparagine 279. Aspartate 307 provides a ligand contact to Fe cation.

It belongs to the KAE1 / TsaD family. It depends on Fe(2+) as a cofactor.

The protein resides in the cytoplasm. The catalysed reaction is L-threonylcarbamoyladenylate + adenosine(37) in tRNA = N(6)-L-threonylcarbamoyladenosine(37) in tRNA + AMP + H(+). Functionally, required for the formation of a threonylcarbamoyl group on adenosine at position 37 (t(6)A37) in tRNAs that read codons beginning with adenine. Is involved in the transfer of the threonylcarbamoyl moiety of threonylcarbamoyl-AMP (TC-AMP) to the N6 group of A37, together with TsaE and TsaB. TsaD likely plays a direct catalytic role in this reaction. The polypeptide is tRNA N6-adenosine threonylcarbamoyltransferase (Syntrophobacter fumaroxidans (strain DSM 10017 / MPOB)).